The primary structure comprises 176 residues: Oleosin Ara h 14.0103 (176 aa).

Ala-2 is subject to N-acetylalanine; alternate. Helical transmembrane passes span 50 to 70, 75 to 95, and 96 to 116; these read IIAV…SGLS, IIGL…IVPA, and VVTI…GLTG. Residues 156-176 form a disordered region; that stretch reads KTKDAGQEIQTKAQDVKRSSS.

Belongs to the oleosin family. In terms of tissue distribution, expressed in seeds (at protein level).

It localises to the lipid droplet. The protein resides in the membrane. In terms of biological role, may have a structural role to stabilize the lipid body during desiccation of the seed by preventing coalescence of the oil. Probably interacts with both lipid and phospholipid moieties of lipid bodies. May also provide recognition signals for specific lipase anchorage in lipolysis during seedling growth. This Arachis hypogaea (Peanut) protein is Oleosin Ara h 14.0103.